Reading from the N-terminus, the 207-residue chain is ConoCAP (207 aa).

Residues Met-1–Ala-21 form the signal peptide. The propeptide occupies Asp-22–Ser-48. Cys-53 and Cys-59 form a disulfide bridge. At Gly-60 the chain carries Glycine amide. Residues His-63–Ala-82 constitute a propeptide that is removed on maturation. Cys-87 and Cys-92 are joined by a disulfide. An Asparagine amide modification is found at Asn-94. The propeptide occupies Ser-98–Ser-160. The interval Ala-131 to Ala-155 is disordered. Positions Arg-143–Asp-152 are enriched in basic and acidic residues. The cysteines at positions 165 and 171 are disulfide-linked. Gly-173 bears the Glycine amide mark. Positions Thr-177–Glu-207 are excised as a propeptide.

As to expression, expressed by the venom duct.

The protein resides in the secreted. Its function is as follows. In contrast to other members of the CCAP family which are cardio-accelerators, conoCAP-a decreases the heart frequency in Drosophila larvae (26%), rats and zebrafish embryos. It also reduces the blood pressure in rats. It decreases systolic calcium in ventricular cardiac myocytes, indicating that it may act via impairment of intracellular calcium trafficking. Synthetic conoCAP-b decreases the heart frequency of 23% in Drosophila larvae. In terms of biological role, synthetic conoCAP-c decreases the heart frequency of 12% in Drosophila larvae. The sequence is that of ConoCAP (conoCAP) from Conus villepinii (Villepin's cone).